The following is a 469-amino-acid chain: Cold shock protein CS66 (469 aa).

Tandem repeats lie at residues 9–31, 49–62, 72–94, 95–108, 115–128, 135–148, 149–162, 170–192, 193–206, 213–226, 234–256, 257–270, 277–290, 298–320, 321–334, 341–354, 362–384, 385–398, 405–418, 428–441, and 452–469. Residues 9–390 are 7 X 23 AA approximate repeats; the sequence is GEKKGIMEKI…DHQQTGGAYG (382 aa). Residues 49-441 form a 14 X 14 AA approximate repeats region; sequence TGGAYGQEGH…HGQHGHTGTT (393 aa). A disordered region spans residues 87–112; that stretch reads GGHADHQQTGGTYGQQGHTGTATHGT. Positions 93–112 are enriched in low complexity; the sequence is QQTGGTYGQQGHTGTATHGT. Over residues 203–214 the composition is skewed to low complexity; sequence FATGTHGTPATG. The segment at 203 to 469 is disordered; that stretch reads FATGTHGTPA…KIKDKLPGQH (267 aa). The span at 233–254 shows a compositional bias: basic and acidic residues; that stretch reads TGEKKGLMENIKDKLPGGHGDH. The segment covering 255 to 274 has biased composition (low complexity); the sequence is QQTGGTYGQQGHTGAATHGT. The span at 288–301 shows a compositional bias: gly residues; the sequence is GMTGTGTHGTGGKK. The span at 302-312 shows a compositional bias: basic and acidic residues; it reads GVMENIKDKLP. Residues 361 to 382 are compositionally biased toward basic and acidic residues; that stretch reads TGEKKAVMENIKDKLPGGHGDH. 2 stretches are compositionally biased toward low complexity: residues 383–402 and 412–429; these read QQTG…THGT and HGNT…TATG. Positions 439-450 are enriched in gly residues; the sequence is GTTGTGTHGTDG. Residues 451-469 are compositionally biased toward basic and acidic residues; the sequence is VGEKKSLMDKIKDKLPGQH.

This sequence belongs to the plant dehydrin family.

In terms of biological role, may reduce intracellular freezing damage during winter by hydrogen-bonding to the lattice of the nascent ice crystals, thus modifying the structure and/or propagation of ice crystals. The sequence is that of Cold shock protein CS66 (CS66) from Triticum aestivum (Wheat).